We begin with the raw amino-acid sequence, 185 residues long: Ribosome maturation factor RimM (185 aa).

A PRC barrel domain is found at 92–168 (DDDTFYHADL…GRRVVVAEAF (77 aa)).

The protein belongs to the RimM family. Binds ribosomal protein uS19.

The protein resides in the cytoplasm. Its function is as follows. An accessory protein needed during the final step in the assembly of 30S ribosomal subunit, possibly for assembly of the head region. Essential for efficient processing of 16S rRNA. May be needed both before and after RbfA during the maturation of 16S rRNA. It has affinity for free ribosomal 30S subunits but not for 70S ribosomes. The polypeptide is Ribosome maturation factor RimM (Xanthobacter autotrophicus (strain ATCC BAA-1158 / Py2)).